A 275-amino-acid chain; its full sequence is Ceramide synthase (275 aa).

Residues 34 to 261 (ADAVIVSARL…ICRGACRLFR (228 aa)) enclose the TLC domain. A run of 4 helical transmembrane segments spans residues 130-150 (FLMVLHHAAMVLVCFPLSVVW), 159-179 (LGCMLMAEVSTPFVCLGKILI), 194-214 (ALMLLSFLCCRVLLFPYLYWA), and 232-252 (AHVNLGAALLLAPQLYWFFLI).

In terms of tissue distribution, each isoform has a distinct expression pattern. Isoform 1 is highly expressed in brain. Isoform 2 is expressed at low levels, if any, in all analyzed tissues, with slightly higher levels in testis. Isoform 3 is expressed at very high levels in testis and, at lower levels, in white adipose tissue. In epididymal fat, isoform 3 is expressed at higher levels in obese mice compared with lean mice. By contrast, isoform 1 and 2 levels are significantly lower in obese mice compared with lean mice.

It is found in the golgi apparatus membrane. It localises to the endoplasmic reticulum membrane. It carries out the reaction sphing-4-enine + octadecanoyl-CoA = N-octadecanoylsphing-4-enine + CoA + H(+). The enzyme catalyses eicosanoyl-CoA + sphing-4-enine = N-eicosanoyl-sphing-4-enine + CoA + H(+). The catalysed reaction is sphing-4-enine + hexadecanoyl-CoA = N-hexadecanoylsphing-4-enine + CoA + H(+). Functionally, involved in ceramide synthesis. In vitro, isoform 3 stimulates the production of C16-, C18- and C20-ceramides, isoform 1 slightly increases the levels of C18- and C20-ceramides, while isoform 2 exhibits only minimal activity. May interfere with adipogenesis by stimulating ceramide synthesis. The sequence is that of Ceramide synthase (Tlcd3b) from Mus musculus (Mouse).